Reading from the N-terminus, the 151-residue chain is UPF0208 membrane protein YPDSF_1972 (151 aa).

The next 2 helical transmembrane spans lie at 46 to 66 (FGIRFMPPLAIFTLTWQIALG) and 69 to 89 (LGPAIATALFACGLPLQGLWW).

Belongs to the UPF0208 family.

It localises to the cell inner membrane. In Yersinia pestis (strain Pestoides F), this protein is UPF0208 membrane protein YPDSF_1972.